The primary structure comprises 262 residues: Deaminated glutathione amidase (262 aa).

The 238-residue stretch at 1–238 (MLVAAGQFAV…PALIMAEVTP (238 aa)) folds into the CN hydrolase domain. The Proton acceptor role is filled by Glu-40. Lys-110 (proton donor) is an active-site residue. Residue Cys-147 is the Nucleophile of the active site.

This sequence belongs to the carbon-nitrogen hydrolase superfamily. NIT1/NIT2 family.

It catalyses the reaction N-(4-oxoglutaryl)-L-cysteinylglycine + H2O = L-cysteinylglycine + 2-oxoglutarate. Hydrolyzes deaminated glutathione (dGSH) to 2-oxoglutarate and L-cysteinylglycine, and no activity on glutathione or L-glutamine. May function as a metabolite repair enzyme. The polypeptide is Deaminated glutathione amidase (ybeM) (Escherichia coli O157:H7).